The following is a 769-amino-acid chain: Serine protease HtrA-like (769 aa).

Positions 1–20 are enriched in basic residues; it reads MDIGKKHVIPKSQYRRKRRE. 2 disordered regions span residues 1 to 287 and 324 to 390; these read MDIG…DKDN and EDKH…KGRA. Composition is skewed to basic and acidic residues over residues 21-64 and 71-108; these read FFHN…ERFK and LEQR…DVSK. Over residues 126–137 the composition is skewed to polar residues; that stretch reads YEQNSEATLSTK. Residues 138-186 show a composition bias toward basic and acidic residues; the sequence is STDKVESTEMRKLSSDKNKVGHEEQHVLSKPSEHDKETRIDSESSRTDS. The segment covering 247-262 has biased composition (polar residues); that stretch reads QQSQNEQTKTYTYGDS. Over residues 264–287 the composition is skewed to basic and acidic residues; that stretch reads QNDKSNHENDLSHHTPSISDDKDN. Residues 331 to 347 are compositionally biased toward polar residues; it reads ADSSETVGYQSQSTASH. Positions 348-364 are enriched in basic and acidic residues; it reads RSTEKRNISINDHDKLN. Polar residues predominate over residues 365 to 390; it reads GQKTNTKTSANNNQKKATSKLNKGRA. The helical transmembrane segment at 410 to 430 threads the bilayer; the sequence is LVILMGIIILIVILNAIFNNV. Catalysis depends on charge relay system residues His-504, Asp-534, and Ser-619. Positions 680-733 constitute a PDZ domain; sequence IASLNSFERQAVKLPGKVKNGVVVDQVDNNGLADQSGLKKGDVITELDGKLLED.

The protein belongs to the peptidase S1C family.

The protein resides in the cell membrane. The polypeptide is Serine protease HtrA-like (Staphylococcus aureus (strain N315)).